The chain runs to 173 residues: Translation initiation factor IF-3 (173 aa).

This sequence belongs to the IF-3 family. Monomer.

It localises to the cytoplasm. IF-3 binds to the 30S ribosomal subunit and shifts the equilibrium between 70S ribosomes and their 50S and 30S subunits in favor of the free subunits, thus enhancing the availability of 30S subunits on which protein synthesis initiation begins. The protein is Translation initiation factor IF-3 of Caulobacter sp. (strain K31).